The primary structure comprises 2065 residues: WD repeat-containing protein 81 (2065 aa).

A BEACH domain is found at 325–617; it reads LCRNCQDELK…EPPHFGRVNV (293 aa). Disordered stretches follow at residues 1082 to 1111, 1156 to 1230, 1271 to 1290, and 1595 to 1642; these read EEEE…GGSG, TTVG…VEDR, GEKN…DSEE, and ASPG…GGDI. Over residues 1101 to 1111 the composition is skewed to gly residues; the sequence is KVGGGSGGGSG. A compositionally biased stretch (polar residues) spans 1156–1169; that stretch reads TTVGTKQQNQSTAN. Residues 1213–1228 are compositionally biased toward acidic residues; the sequence is DGEDGGELEDEEETVE. Over residues 1624 to 1637 the composition is skewed to low complexity; the sequence is SRSPFPAPSSTSTP. 5 WD repeats span residues 1767–1806, 1813–1853, 1906–1945, 1948–1986, and 2035–2065; these read GHSG…DGTR, TYTE…NIRC, LSAG…VLRG, GHEG…PLHQ, and NFRG…RLLA.

The protein belongs to the WD repeat WDR81 family. Widely expressed.

The protein localises to the early endosome membrane. Its subcellular location is the late endosome membrane. The protein resides in the lysosome membrane. It is found in the cytoplasmic vesicle. It localises to the autophagosome membrane. The protein localises to the mitochondrion. Its subcellular location is the cytoplasm. The protein resides in the cytosol. Its function is as follows. Functions as a negative regulator of the PI3 kinase/PI3K activity associated with endosomal membranes. By modifying the phosphatidylinositol 3-phosphate/PtdInsP3 content of endosomal membranes may regulate endosome fusion, recycling, sorting and early to late endosome transport. May also play a role in aggrephagy, the macroautophagic degradation of ubiquitinated protein aggregates. May also be involved in maintenance of normal mitochondrial structure and organization. The protein is WD repeat-containing protein 81 (wdr81) of Danio rerio (Zebrafish).